Consider the following 520-residue polypeptide: Bifunctional purine biosynthesis protein PurH (520 aa).

Positions 1 to 147 (MAKIGRALIS…KNNRDVTVVV (147 aa)) constitute an MGS-like domain.

Belongs to the PurH family.

The catalysed reaction is (6R)-10-formyltetrahydrofolate + 5-amino-1-(5-phospho-beta-D-ribosyl)imidazole-4-carboxamide = 5-formamido-1-(5-phospho-D-ribosyl)imidazole-4-carboxamide + (6S)-5,6,7,8-tetrahydrofolate. It carries out the reaction IMP + H2O = 5-formamido-1-(5-phospho-D-ribosyl)imidazole-4-carboxamide. It participates in purine metabolism; IMP biosynthesis via de novo pathway; 5-formamido-1-(5-phospho-D-ribosyl)imidazole-4-carboxamide from 5-amino-1-(5-phospho-D-ribosyl)imidazole-4-carboxamide (10-formyl THF route): step 1/1. The protein operates within purine metabolism; IMP biosynthesis via de novo pathway; IMP from 5-formamido-1-(5-phospho-D-ribosyl)imidazole-4-carboxamide: step 1/1. The sequence is that of Bifunctional purine biosynthesis protein PurH from Citrifermentans bemidjiense (strain ATCC BAA-1014 / DSM 16622 / JCM 12645 / Bem) (Geobacter bemidjiensis).